The primary structure comprises 340 residues: Ketol-acid reductoisomerase (NADP(+)) (340 aa).

The region spanning 1-182 (MRVYYDRDCD…GGGRSGIIET (182 aa)) is the KARI N-terminal Rossmann domain. NADP(+) is bound by residues 24–27 (YGSQ), R48, S51, S53, and 83–86 (DELQ). Residue H108 is part of the active site. G134 is a binding site for NADP(+). The region spanning 183-329 (NFRQECETDL…EKLRGMMPWI (147 aa)) is the KARI C-terminal knotted domain. Mg(2+) is bound by residues D191, E195, E227, and E231. Position 252 (S252) interacts with substrate.

The protein belongs to the ketol-acid reductoisomerase family. The cofactor is Mg(2+).

It carries out the reaction (2R)-2,3-dihydroxy-3-methylbutanoate + NADP(+) = (2S)-2-acetolactate + NADPH + H(+). It catalyses the reaction (2R,3R)-2,3-dihydroxy-3-methylpentanoate + NADP(+) = (S)-2-ethyl-2-hydroxy-3-oxobutanoate + NADPH + H(+). The protein operates within amino-acid biosynthesis; L-isoleucine biosynthesis; L-isoleucine from 2-oxobutanoate: step 2/4. Its pathway is amino-acid biosynthesis; L-valine biosynthesis; L-valine from pyruvate: step 2/4. Functionally, involved in the biosynthesis of branched-chain amino acids (BCAA). Catalyzes an alkyl-migration followed by a ketol-acid reduction of (S)-2-acetolactate (S2AL) to yield (R)-2,3-dihydroxy-isovalerate. In the isomerase reaction, S2AL is rearranged via a Mg-dependent methyl migration to produce 3-hydroxy-3-methyl-2-ketobutyrate (HMKB). In the reductase reaction, this 2-ketoacid undergoes a metal-dependent reduction by NADPH to yield (R)-2,3-dihydroxy-isovalerate. The protein is Ketol-acid reductoisomerase (NADP(+)) of Cereibacter sphaeroides (strain ATCC 17023 / DSM 158 / JCM 6121 / CCUG 31486 / LMG 2827 / NBRC 12203 / NCIMB 8253 / ATH 2.4.1.) (Rhodobacter sphaeroides).